We begin with the raw amino-acid sequence, 1044 residues long: Elongation factor 3A (1044 aa).

At S2 the chain carries N-acetylserine. An HEAT 1 repeat occupies 5–42 (QQSIKVLEELFQKLSVATADNRHEIASEVASFLNGNII). ADP is bound by residues I42, H44, and S83. HEAT repeat units follow at residues 86 to 123 (PYIVQLVPAICTNAGNKDKEIQSVASETLISIVNAVNP), 125 to 162 (AIKALLPHLTNAIVETNKWQEKIAILAAISAMVDAAKD), 166 to 203 (LRMPELIPVLSETMWDTKKEVKAAATAAMTKATETVDN), 205 to 241 (DIERFIPSLIQCIADPTEVPETVHLLGATTFVAEVTP), 242 to 279 (ATLSIMVPLLSRGLNERETGIKRKSAVIIDNMCKLVED), and 285 to 323 (PFLGKLLPGLKSNFATIADPEAREVTLRALKTLRRVGNV). N6,N6,N6-trimethyllysine is present on residues K187 and K196. Residue K350 forms a Glycyl lysine isopeptide (Lys-Gly) (interchain with G-Cter in ubiquitin) linkage. ADP contacts are provided by T392, H396, and E397. The ABC transporter 1 domain occupies 426–641 (DEGEDLCNCE…CPAAKAYEEL (216 aa)). K636 participates in a covalent cross-link: Glycyl lysine isopeptide (Lys-Gly) (interchain with G-Cter in ubiquitin). S642 is subject to Phosphoserine. One can recognise an ABC transporter 2 domain in the interval 667–993 (VKVTNMEFQY…AGPRIEKKED (327 aa)). ADP is bound at residue N703. K789 bears the N6,N6,N6-trimethyllysine mark. E922, N925, and H951 together coordinate ADP. A Phosphothreonine modification is found at T972. At S974 the chain carries Phosphoserine. Residues 974 to 1044 (SGHNWVSGQG…DAYVSSDEEF (71 aa)) are disordered. Residues 1007-1031 (GGKKKKKLSSAELRKKKKERMKKKK) are compositionally biased toward basic residues. Residues S1039 and S1040 each carry the phosphoserine modification.

This sequence belongs to the ABC transporter superfamily. ABCF family. EF3 subfamily. Monomer. Interacts with elongation factor 1A (eEF1A). Interacts through its N-terminus with 18S rRNA. Associates with ribosomes; preferentially binds ribosomes in the post-translocational state (bearing a peptidyl-tRNA in the P-site) in the presence of ATP, suggesting that ATP hydrolysis is required for ribosome dissociation.

The protein localises to the cytoplasm. It localises to the cytosol. It carries out the reaction ATP + H2O = ADP + phosphate + H(+). It functions in the pathway protein biosynthesis; polypeptide chain elongation. With respect to regulation, inhibited by the translational inhibitors neomycin and alpha-sarcin, which suppress the ATPase activity. Its function is as follows. Ribosome-dependent ATPase that functions in cytoplasmic translation elongation. Required for the ATP-dependent release of deacylated tRNA from the ribosomal E-site during protein biosynthesis. Stimulates the eEF1A-dependent binding of aminoacyl-tRNA to the ribosomal A-site, which has reduced affinity for tRNA as long as the E-site is occupied. Assists translation termination by stimulating the release of nascent protein from the ribosome by release factors. In nutrient-replete conditions, occupies the space on the ribosome bound by GCN1 during amino acid starvation conditions, and therefore indirectly negatively regulates GCN2 kinase activity in replete conditions. The sequence is that of Elongation factor 3A (YEF3) from Saccharomyces cerevisiae (strain ATCC 204508 / S288c) (Baker's yeast).